The chain runs to 130 residues: Annexin A1 (130 aa).

An Isoglutamyl lysine isopeptide (Gln-Lys) (interchain with K-?) cross-link involves residue Gln-19. At Ser-24 the chain carries Phosphoserine; by PKC. 2 Annexin repeats span residues 37 to 108 (FDPS…ALLK) and 109 to 130 (TPAQFDAEELRASMKGLGTDRR). Gly-54, Val-55, Glu-57, Lys-92, Leu-95, Glu-100, Met-122, Gly-124, Gly-126, Thr-127, and Arg-130 together coordinate Ca(2+).

The protein belongs to the annexin family.

Its subcellular location is the nucleus. The protein localises to the cytoplasm. The protein resides in the cell projection. It is found in the cilium. It localises to the basolateral cell membrane. Its subcellular location is the lateral cell membrane. The protein localises to the cell membrane. The protein resides in the apical cell membrane. It is found in the membrane. It localises to the early endosome. Its subcellular location is the cytoplasmic vesicle membrane. The protein localises to the endosome membrane. The protein resides in the secreted. It is found in the extracellular space. It localises to the extracellular exosome. Its subcellular location is the cytoplasmic vesicle. The protein localises to the secretory vesicle lumen. The protein resides in the phagocytic cup. Plays important roles in the innate immune response as effector of glucocorticoid-mediated responses and regulator of the inflammatory process. Has anti-inflammatory activity. Plays a role in glucocorticoid-mediated down-regulation of the early phase of the inflammatory response. Promotes resolution of inflammation and wound healing. Functions at least in part by activating the formyl peptide receptors and downstream signaling cascades. Promotes chemotaxis of granulocytes and monocytes via activation of the formyl peptide receptors. Contributes to the adaptive immune response by enhancing signaling cascades that are triggered by T-cell activation, regulates differentiation and proliferation of activated T-cells. Promotes the differentiation of T-cells into Th1 cells and negatively regulates differentiation into Th2 cells. Has no effect on unstimulated T-cells. Promotes rearrangement of the actin cytoskeleton, cell polarization and cell migration. Negatively regulates hormone exocytosis via activation of the formyl peptide receptors and reorganization of the actin cytoskeleton. Has high affinity for Ca(2+) and can bind up to eight Ca(2+) ions. Displays Ca(2+)-dependent binding to phospholipid membranes. Plays a role in the formation of phagocytic cups and phagosomes. Plays a role in phagocytosis by mediating the Ca(2+)-dependent interaction between phagosomes and the actin cytoskeleton. The chain is Annexin A1 (ANXA1) from Gallus gallus (Chicken).